The primary structure comprises 515 residues: Sterol 14-alpha demethylase cyp51A (515 aa).

Residues 7–29 (LTAYMAVAVLTAILLNVVYQLFF) form a helical membrane-spanning segment. 2 N-linked (GlcNAc...) asparagine glycosylation sites follow: Asn33 and Asn269. Position 454 (Cys454) interacts with heme. N-linked (GlcNAc...) asparagine glycosylation occurs at Asn512.

This sequence belongs to the cytochrome P450 family. Heme is required as a cofactor.

Its subcellular location is the endoplasmic reticulum membrane. The catalysed reaction is a 14alpha-methyl steroid + 3 reduced [NADPH--hemoprotein reductase] + 3 O2 = a Delta(14) steroid + formate + 3 oxidized [NADPH--hemoprotein reductase] + 4 H2O + 4 H(+). It carries out the reaction a 14alpha-methyl steroid + reduced [NADPH--hemoprotein reductase] + O2 = a 14alpha-hydroxymethyl steroid + oxidized [NADPH--hemoprotein reductase] + H2O + H(+). It catalyses the reaction a 14alpha-hydroxymethyl steroid + reduced [NADPH--hemoprotein reductase] + O2 = a 14alpha-formyl steroid + oxidized [NADPH--hemoprotein reductase] + 2 H2O + H(+). The enzyme catalyses a 14alpha-formyl steroid + reduced [NADPH--hemoprotein reductase] + O2 = a Delta(14) steroid + formate + oxidized [NADPH--hemoprotein reductase] + H2O + 2 H(+). The catalysed reaction is lanosterol + 3 reduced [NADPH--hemoprotein reductase] + 3 O2 = 4,4-dimethyl-5alpha-cholesta-8,14,24-trien-3beta-ol + formate + 3 oxidized [NADPH--hemoprotein reductase] + 4 H2O + 4 H(+). It carries out the reaction lanosterol + reduced [NADPH--hemoprotein reductase] + O2 = 32-hydroxylanosterol + oxidized [NADPH--hemoprotein reductase] + H2O + H(+). It catalyses the reaction 32-hydroxylanosterol + reduced [NADPH--hemoprotein reductase] + O2 = 32-oxolanosterol + oxidized [NADPH--hemoprotein reductase] + 2 H2O + H(+). The enzyme catalyses 32-oxolanosterol + reduced [NADPH--hemoprotein reductase] + O2 = 4,4-dimethyl-5alpha-cholesta-8,14,24-trien-3beta-ol + formate + oxidized [NADPH--hemoprotein reductase] + H2O + 2 H(+). The catalysed reaction is eburicol + 3 reduced [NADPH--hemoprotein reductase] + 3 O2 = 14-demethyleburicol + formate + 3 oxidized [NADPH--hemoprotein reductase] + 4 H2O + 4 H(+). It carries out the reaction eburicol + reduced [NADPH--hemoprotein reductase] + O2 = 32-hydroxyeburicol + oxidized [NADPH--hemoprotein reductase] + H2O + H(+). It catalyses the reaction 32-hydroxyeburicol + reduced [NADPH--hemoprotein reductase] + O2 = 32-oxoeburicol + oxidized [NADPH--hemoprotein reductase] + 2 H2O + H(+). The enzyme catalyses 32-oxoeburicol + reduced [NADPH--hemoprotein reductase] + O2 = 14-demethyleburicol + formate + oxidized [NADPH--hemoprotein reductase] + H2O + 2 H(+). It participates in steroid metabolism; ergosterol biosynthesis. The sterol 14-alpha demethylase activity is inhibited by azole compounds. Activity is inhibited by the novel and long-acting fungicidal azole, PC1244. Its function is as follows. Sterol 14alpha-demethylase, encoded by cyp51A and cyp51B, that plays a critical role in the third module of ergosterol biosynthesis pathway, being ergosterol the major sterol component in fungal membranes that participates in a variety of functions. The third module or late pathway involves the ergosterol synthesis itself through consecutive reactions that mainly occur in the endoplasmic reticulum (ER) membrane. In filamentous fungi, during the initial step of this module, lanosterol (lanosta-8,24-dien-3beta-ol) can be metabolized to eburicol. Sterol 14alpha-demethylase catalyzes the three-step oxidative removal of the 14alpha-methyl group (C-32) of both these sterols in the form of formate, and converts eburicol and lanosterol to 14-demethyleburicol (4,4,24-trimethylergosta-8,14,24(28)-trienol) and 4,4-dimethyl-5alpha-cholesta-8,14,24-trien-3beta-ol, respectively, which are further metabolized by other enzymes in the pathway to ergosterol. Can also use substrates not intrinsic to fungi, such as 24,25-dihydrolanosterol (DHL), producing 4,4'-dimethyl-8,14-cholestadien-3-beta-ol, but at lower rates than the endogenous substrates. In terms of biological role, as a target of azole drugs, plays a crucial role in azole susceptibility. In Aspergillus fumigatus (strain ATCC MYA-4609 / CBS 101355 / FGSC A1100 / Af293) (Neosartorya fumigata), this protein is Sterol 14-alpha demethylase cyp51A.